We begin with the raw amino-acid sequence, 597 residues long: Hydrogenase-1 large chain (597 aa).

Ni(2+)-binding residues include Cys-76, Cys-79, Cys-576, and Cys-579.

This sequence belongs to the [NiFe]/[NiFeSe] hydrogenase large subunit family. Heterodimer of a large and a small subunit. Ni(2+) serves as cofactor.

The protein resides in the cell membrane. It catalyses the reaction H2 + A = AH2. Functionally, this is one of three E.coli hydrogenases synthesized in response to different physiological conditions. HYD1 is believed to have a role in hydrogen cycling during fermentative growth. This is Hydrogenase-1 large chain (hyaB) from Escherichia coli (strain K12).